A 402-amino-acid chain; its full sequence is Protein FAM221B (402 aa).

The span at 1-35 (MEAHEIIEEPHITMDAEKHPPSKDPSAEDLQENHI) shows a compositional bias: basic and acidic residues. 2 disordered regions span residues 1–205 (MEAH…TARP) and 378–402 (DTQK…HRPL). 2 stretches are compositionally biased toward polar residues: residues 77–90 (EPSI…TPTY) and 393–402 (DTVSNWHRPL).

Belongs to the FAM221 family.

The chain is Protein FAM221B (FAM221B) from Homo sapiens (Human).